Reading from the N-terminus, the 197-residue chain is Xanthine phosphoribosyltransferase (197 aa).

Residues Leu-20 and Asn-27 each coordinate xanthine. Residue 128–132 (ANGQA) participates in 5-phospho-alpha-D-ribose 1-diphosphate binding. Lys-156 contributes to the xanthine binding site.

Belongs to the purine/pyrimidine phosphoribosyltransferase family. Xpt subfamily. In terms of assembly, homodimer.

The protein localises to the cytoplasm. The enzyme catalyses XMP + diphosphate = xanthine + 5-phospho-alpha-D-ribose 1-diphosphate. Its pathway is purine metabolism; XMP biosynthesis via salvage pathway; XMP from xanthine: step 1/1. Functionally, converts the preformed base xanthine, a product of nucleic acid breakdown, to xanthosine 5'-monophosphate (XMP), so it can be reused for RNA or DNA synthesis. This Bacillus cereus (strain G9842) protein is Xanthine phosphoribosyltransferase.